The sequence spans 150 residues: UPF0506 protein SJCHGC03144 (150 aa).

The signal sequence occupies residues 1-18 (MNTCIQLLILCLVTVINS). Asparagine 20, asparagine 36, asparagine 52, and asparagine 110 each carry an N-linked (GlcNAc...) asparagine glycan. 3 disulfide bridges follow: cysteine 116–cysteine 130, cysteine 123–cysteine 134, and cysteine 129–cysteine 139.

This sequence belongs to the UPF0506 family.

The protein resides in the secreted. The chain is UPF0506 protein SJCHGC03144 from Schistosoma japonicum (Blood fluke).